A 602-amino-acid chain; its full sequence is MKIHELPQEVILKIAAGEVVTGCFSVVKELVENALDAEATTVEVEIKAGGKEYIRVSDNGIGMLPEELKMAIKPHTTSKIQCIEDLERILTYGFRGEALSTISSVSRMRISSMPDNADLGLTIEISGGKIVREKSYIGPKGTTVEVYDLLFNTPARRKFLKSQRVEGRMVTEIVQRFILAIPDAGFKYIRDGELIYDLTPAERILERIPVVFPELSTTDLLEVKEETSGISITGYITFPERTRFNRLGEMVFVNGRYVRQPELNYAIEKGYGESLEKGRFPFAILFISVNPEMIDVNIHPQKLEVRFSNPSLVFDAIKRAVRNTLRTSGTSILRIEKRPFPGSSTNYSGIQQDTKKQESDNPEKARGYGTHLRETHWEQRDHFEKRKVPLHYQPDNELLLNIERTASRRFEKTEAKETGEPRLFGVFGERYILAETKDGLLIVDQHAAHERLIYEKLKKAAKIQSQKLLSPIRLTLEDSRKSLLREKKNDVEKLGFQISFEGDRIFLTGIPSILSESVAVNALNEVLDELRLEGLEEPEKIFDHLLSTLACKSAIKTGDRLSESEAKELLEKLLEEEILFCPHGRPVSMLIRFKDLDRHFSR.

The disordered stretch occupies residues 337-367 (KRPFPGSSTNYSGIQQDTKKQESDNPEKARG). The span at 342 to 352 (GSSTNYSGIQQ) shows a compositional bias: polar residues. Basic and acidic residues predominate over residues 353–367 (DTKKQESDNPEKARG).

Belongs to the DNA mismatch repair MutL/HexB family.

Functionally, this protein is involved in the repair of mismatches in DNA. It is required for dam-dependent methyl-directed DNA mismatch repair. May act as a 'molecular matchmaker', a protein that promotes the formation of a stable complex between two or more DNA-binding proteins in an ATP-dependent manner without itself being part of a final effector complex. The sequence is that of DNA mismatch repair protein MutL from Kosmotoga olearia (strain ATCC BAA-1733 / DSM 21960 / TBF 19.5.1).